The sequence spans 84 residues: Small ribosomal subunit protein uS17 (84 aa).

It belongs to the universal ribosomal protein uS17 family. In terms of assembly, part of the 30S ribosomal subunit.

In terms of biological role, one of the primary rRNA binding proteins, it binds specifically to the 5'-end of 16S ribosomal RNA. The sequence is that of Small ribosomal subunit protein uS17 from Photobacterium profundum (strain SS9).